Consider the following 549-residue polypeptide: Glucose-6-phosphate isomerase (549 aa).

Residue Glu355 is the Proton donor of the active site. Residues His387 and Lys515 contribute to the active site.

The protein belongs to the GPI family.

Its subcellular location is the cytoplasm. The catalysed reaction is alpha-D-glucose 6-phosphate = beta-D-fructose 6-phosphate. It participates in carbohydrate biosynthesis; gluconeogenesis. It functions in the pathway carbohydrate degradation; glycolysis; D-glyceraldehyde 3-phosphate and glycerone phosphate from D-glucose: step 2/4. Catalyzes the reversible isomerization of glucose-6-phosphate to fructose-6-phosphate. This chain is Glucose-6-phosphate isomerase, found in Haemophilus influenzae (strain PittGG).